Here is a 256-residue protein sequence, read N- to C-terminus: Alcohol dehydrogenase (256 aa).

12-35 serves as a coordination point for NAD(+); it reads FVAGLGGIGLDTSKELVKRDLKNL. Residue Ser-140 participates in substrate binding. Tyr-153 (proton acceptor) is an active-site residue.

Belongs to the short-chain dehydrogenases/reductases (SDR) family. In terms of assembly, homodimer.

It catalyses the reaction a primary alcohol + NAD(+) = an aldehyde + NADH + H(+). The enzyme catalyses a secondary alcohol + NAD(+) = a ketone + NADH + H(+). The polypeptide is Alcohol dehydrogenase (Adh) (Drosophila tsacasi (Fruit fly)).